Consider the following 134-residue polypeptide: Small ribosomal subunit protein uS9 (134 aa).

The disordered stretch occupies residues 113–134; it reads REVERKKYGLKKARRAPQFSKR. Basic residues predominate over residues 120–134; that stretch reads YGLKKARRAPQFSKR.

The protein belongs to the universal ribosomal protein uS9 family.

The protein is Small ribosomal subunit protein uS9 of Thermotoga petrophila (strain ATCC BAA-488 / DSM 13995 / JCM 10881 / RKU-1).